A 183-amino-acid chain; its full sequence is Endoribonuclease YbeY (183 aa).

The Zn(2+) site is built by His-142, His-146, and His-152.

It belongs to the endoribonuclease YbeY family. The cofactor is Zn(2+).

Its subcellular location is the cytoplasm. Its function is as follows. Single strand-specific metallo-endoribonuclease involved in late-stage 70S ribosome quality control and in maturation of the 3' terminus of the 16S rRNA. This chain is Endoribonuclease YbeY, found in Trichodesmium erythraeum (strain IMS101).